Reading from the N-terminus, the 150-residue chain is Endoribonuclease YbeY (150 aa).

Positions 113, 117, and 123 each coordinate Zn(2+).

The protein belongs to the endoribonuclease YbeY family. Zn(2+) is required as a cofactor.

The protein localises to the cytoplasm. Functionally, single strand-specific metallo-endoribonuclease involved in late-stage 70S ribosome quality control and in maturation of the 3' terminus of the 16S rRNA. This chain is Endoribonuclease YbeY, found in Malacoplasma penetrans (strain HF-2) (Mycoplasma penetrans).